Reading from the N-terminus, the 124-residue chain is Cholera enterotoxin subunit B (124 aa).

Residues 1-21 (MIKLKFGVFFTVLLSSAYAHG) form the signal peptide. An intrachain disulfide couples C30 to C107.

As to quaternary structure, the holotoxin (choleragen) consists of a pentameric ring of B subunits whose central pore is occupied by the A subunit. The A subunit contains two chains, A1 and A2, linked by a disulfide bridge.

It is found in the secreted. The protein resides in the host cell membrane. The B subunit pentameric ring directs the A subunit to its target by binding to the GM1 gangliosides present on the surface of the intestinal epithelial cells. It can bind five GM1 gangliosides. It has no toxic activity by itself. The chain is Cholera enterotoxin subunit B (ctxB) from Vibrio cholerae serotype O1 (strain ATCC 39315 / El Tor Inaba N16961).